A 746-amino-acid chain; its full sequence is Zinc finger protein 366 (746 aa).

Residues 1–64 form a disordered region; sequence MQKAMKMVKD…FRYEPSPGDL (64 aa). 11 C2H2-type zinc fingers span residues 250–272, 278–300, 306–328, 334–356, 362–384, 390–412, 418–440, 446–468, 474–496, 502–524, and 530–553; these read WQCP…ILGH, HACS…MLTH, HKCQ…MMQH, HNCR…EAKH, NICV…LTTH, YNCS…MMKH, YICS…SLTH, HKCG…VLIH, YQCH…MIVH, FKCK…LHLH, and FKCL…KVKH. The interaction with NRIP1 stretch occupies residues 452–746; that stretch reads GREFTLLANM…MEKQAVLLGI (295 aa). A PXDLS motif is present at residues 587–591; sequence PFDLS. The segment at 587–689 is disordered; sequence PFDLSQKRSA…DHEGSDIDCE (103 aa). Positions 613-627 are enriched in acidic residues; the sequence is CQEEEEEAGEEDNCY. Over residues 675–689 the composition is skewed to basic and acidic residues; that stretch reads EDRSEDHEGSDIDCE.

As to quaternary structure, interacts with ESR1 and NRIP1. Interacts (via PXDLS motif) with CTBP1. In terms of tissue distribution, expressed in immature and mature dendritic cells (DCs).

Its subcellular location is the nucleus. In terms of biological role, has transcriptional repression activity. Acts as a corepressor of ESR1; the function seems to involve CTBP1 and histone deacetylases. The sequence is that of Zinc finger protein 366 from Mus musculus (Mouse).